A 119-amino-acid chain; its full sequence is Large ribosomal subunit protein bL20 (119 aa).

The protein belongs to the bacterial ribosomal protein bL20 family.

Binds directly to 23S ribosomal RNA and is necessary for the in vitro assembly process of the 50S ribosomal subunit. It is not involved in the protein synthesizing functions of that subunit. The chain is Large ribosomal subunit protein bL20 from Xanthomonas oryzae pv. oryzae (strain PXO99A).